Here is a 190-residue protein sequence, read N- to C-terminus: Ribosome maturation factor RimM (190 aa).

One can recognise a PRC barrel domain in the interval 102–190; sequence EDEYYWIDLV…RIDSDWPLED (89 aa).

This sequence belongs to the RimM family. In terms of assembly, binds ribosomal protein uS19.

The protein localises to the cytoplasm. In terms of biological role, an accessory protein needed during the final step in the assembly of 30S ribosomal subunit, possibly for assembly of the head region. Essential for efficient processing of 16S rRNA. May be needed both before and after RbfA during the maturation of 16S rRNA. It has affinity for free ribosomal 30S subunits but not for 70S ribosomes. In Bordetella avium (strain 197N), this protein is Ribosome maturation factor RimM.